A 117-amino-acid chain; its full sequence is Immunoglobulin heavy variable 1-45 (117 aa).

The signal sequence occupies residues 1 to 19 (MDWTWRILFLVAAVTDAYS). The segment at 20-44 (QMQLVQSGAEVKKTGSSVKVSCKAS) is framework-1. One can recognise an Ig-like domain in the interval 20–117 (QMQLVQSGAE…EDTAMYYCAR (98 aa)). A disulfide bridge links C41 with C115. The segment at 45–52 (GYTFTYRY) is complementarity-determining-1. The interval 53–69 (LHWVRQAPGQALEWMGW) is framework-2. The tract at residues 70-77 (ITPFNGNT) is complementarity-determining-2. The framework-3 stretch occupies residues 78 to 115 (NYAQKFQDRVTITRDRSMSTAYMELSSLRSEDTAMYYC). The interval 116 to 117 (AR) is complementarity-determining-3.

As to quaternary structure, immunoglobulins are composed of two identical heavy chains and two identical light chains; disulfide-linked.

The protein resides in the secreted. It localises to the cell membrane. In terms of biological role, v region of the variable domain of immunoglobulin heavy chains that participates in the antigen recognition. Immunoglobulins, also known as antibodies, are membrane-bound or secreted glycoproteins produced by B lymphocytes. In the recognition phase of humoral immunity, the membrane-bound immunoglobulins serve as receptors which, upon binding of a specific antigen, trigger the clonal expansion and differentiation of B lymphocytes into immunoglobulins-secreting plasma cells. Secreted immunoglobulins mediate the effector phase of humoral immunity, which results in the elimination of bound antigens. The antigen binding site is formed by the variable domain of one heavy chain, together with that of its associated light chain. Thus, each immunoglobulin has two antigen binding sites with remarkable affinity for a particular antigen. The variable domains are assembled by a process called V-(D)-J rearrangement and can then be subjected to somatic hypermutations which, after exposure to antigen and selection, allow affinity maturation for a particular antigen. In Homo sapiens (Human), this protein is Immunoglobulin heavy variable 1-45.